We begin with the raw amino-acid sequence, 316 residues long: tRNA dimethylallyltransferase (316 aa).

23–30 (GPTASGKS) lines the ATP pocket. A substrate-binding site is contributed by 25–30 (TASGKS). The segment at 48–51 (DSMQ) is interaction with substrate tRNA.

This sequence belongs to the IPP transferase family. In terms of assembly, monomer. Mg(2+) is required as a cofactor.

It catalyses the reaction adenosine(37) in tRNA + dimethylallyl diphosphate = N(6)-dimethylallyladenosine(37) in tRNA + diphosphate. Its function is as follows. Catalyzes the transfer of a dimethylallyl group onto the adenine at position 37 in tRNAs that read codons beginning with uridine, leading to the formation of N6-(dimethylallyl)adenosine (i(6)A). The protein is tRNA dimethylallyltransferase of Rhodopseudomonas palustris (strain BisB18).